Here is a 634-residue protein sequence, read N- to C-terminus: MYDLLKTIDDPADLRRLDRRQLQPLADELRAFVLDSVSKTGGHLSSNLGTVELTIALHYVFNTPNDRIVWDVGHQTYPHKILTGRRDQMHSLRQYDGISGFPRRSESEYDTFGTAHSSTSISAALGMAIGSQLNGDDRFSIAVIGDGAMTAGMAFEAMNNAGVSEDAKLLVILNDNDMSISPPVGALNRHLARLMSGRFYAAARAGVERVLSVAPPVLELARKLEEHAKGMVVPATLFEEFGFNYIGPIDGHDLDSLIPTLQNIRELRGPQFLHVVTKKGQGYKLAEADPVLYHGPGKFNPAEGIKPSTTPAKKTYTQVFGEWLCDEAERDTRVVGITPAMREGSGMVEFEKRFKDRYYDVGIAEQHAVTFAGGLATEGLKPVVAIYSTFLQRAYDQLIHDVALQNLPVVFAIDRAGLVGADGATHAGAYDLAFMRCIPNMTIMAASDENECRQMLHTALQQPNPTAVRYPRGAGTGVATVKEFTEIPLGKGEVRRRTSQPEGKRVAILAFGTMVAPSLAAAEELDATVANMRFVKPVDAALVRELAETHDYLVTVEEGCVMGGAGSACVEALMESGVIRPVLQLGLPDQFVDHGDHAKLLAQCGLDGAGIAKSIRERFLSPAADVAGHAKRVA.

Thiamine diphosphate-binding positions include His74 and 115 to 117 (AHS). Residue Asp146 participates in Mg(2+) binding. Thiamine diphosphate contacts are provided by residues 147–148 (GA), Asn176, Tyr283, and Glu365. Mg(2+) is bound at residue Asn176.

This sequence belongs to the transketolase family. DXPS subfamily. As to quaternary structure, homodimer. The cofactor is Mg(2+). It depends on thiamine diphosphate as a cofactor.

The catalysed reaction is D-glyceraldehyde 3-phosphate + pyruvate + H(+) = 1-deoxy-D-xylulose 5-phosphate + CO2. It functions in the pathway metabolic intermediate biosynthesis; 1-deoxy-D-xylulose 5-phosphate biosynthesis; 1-deoxy-D-xylulose 5-phosphate from D-glyceraldehyde 3-phosphate and pyruvate: step 1/1. Functionally, catalyzes the acyloin condensation reaction between C atoms 2 and 3 of pyruvate and glyceraldehyde 3-phosphate to yield 1-deoxy-D-xylulose-5-phosphate (DXP). This Burkholderia orbicola (strain MC0-3) protein is 1-deoxy-D-xylulose-5-phosphate synthase.